The primary structure comprises 628 residues: Probable potassium transport system protein Kup (628 aa).

12 consecutive transmembrane segments (helical) span residues 20–40, 63–83, 110–130, 151–171, 178–198, 212–232, 256–276, 296–316, 346–366, 375–395, 398–418, and 422–442; these read ALLT…SPLY, IISM…VMLV, FVAV…VITP, FILP…PLGT, FGPI…PQII, ALGL…AVVL, WFCV…ALVI, IPLV…VISG, IYMP…VLVF, AYGL…LIYV, TWWK…LLFA, and TKIH…IVVM.

This sequence belongs to the HAK/KUP transporter (TC 2.A.72) family.

It localises to the cell membrane. It catalyses the reaction K(+)(in) + H(+)(in) = K(+)(out) + H(+)(out). Transport of potassium into the cell. Likely operates as a K(+):H(+) symporter. The sequence is that of Probable potassium transport system protein Kup from Corynebacterium glutamicum (strain R).